Reading from the N-terminus, the 215-residue chain is Thymidylate kinase (215 aa).

10–17 (GGEGVGKT) contributes to the ATP binding site.

It belongs to the thymidylate kinase family.

It carries out the reaction dTMP + ATP = dTDP + ADP. Its function is as follows. Phosphorylation of dTMP to form dTDP in both de novo and salvage pathways of dTTP synthesis. In Bartonella henselae (strain ATCC 49882 / DSM 28221 / CCUG 30454 / Houston 1) (Rochalimaea henselae), this protein is Thymidylate kinase.